Reading from the N-terminus, the 142-residue chain is Potassium voltage-gated channel subfamily E regulatory beta subunit 5 (142 aa).

Asn-2 and Asn-25 each carry an N-linked (GlcNAc...) asparagine glycan. Residues Leu-61 to Tyr-81 traverse the membrane as a helical segment. Over Thr-82–Val-142 the chain is Cytoplasmic. Residues Ser-119 to Val-142 form a disordered region.

Belongs to the potassium channel KCNE family. In terms of assembly, interacts with KCNQ1; impairs KCNQ1 localization in lipid rafts and only conducts current upon strong and continued depolarization. Highly expressed in heart, skeletal muscle, brain, spinal cord and placenta.

The protein resides in the membrane. Functionally, potassium channel ancillary subunit that is essential for generation of some native K(+) currents by virtue of formation of heteromeric ion channel complex with voltage-gated potassium (Kv) channel pore-forming alpha subunits. Functions as an inhibitory beta-subunit of the repolarizing cardiac potassium ion channel KCNQ1. The chain is Potassium voltage-gated channel subfamily E regulatory beta subunit 5 (KCNE5) from Homo sapiens (Human).